We begin with the raw amino-acid sequence, 211 residues long: MPEPIIIEPEPAVAGSLFGDRIDVAREFTAQLGQRGEELGLIGPLEPPRLWSRHVINSVLVAPLLRPGLVGDIGTGAGLPGLVLAIARPDVDFVLIEPMERRVAWLEEQVAHLALGNVSVRRARAEEVAQEFNLDQVTARAVSAFAKLIPLTVPLVKTGGELVLMKGSNAEREVEAASKAIRKYHLEDVEVITLGSGQVDEVTRVVRARVA.

S-adenosyl-L-methionine contacts are provided by residues Gly-74, Leu-79, 125–126 (AE), and Arg-140.

The protein belongs to the methyltransferase superfamily. RNA methyltransferase RsmG family.

It localises to the cytoplasm. In terms of biological role, specifically methylates the N7 position of guanine in position 518 of 16S rRNA. This Clavibacter michiganensis subsp. michiganensis (strain NCPPB 382) protein is Ribosomal RNA small subunit methyltransferase G.